Consider the following 443-residue polypeptide: ATP-dependent protease ATPase subunit HslU (443 aa).

Residues Ile18, 60–65 (GVGKTE), Asp256, Glu321, and Arg393 contribute to the ATP site.

The protein belongs to the ClpX chaperone family. HslU subfamily. In terms of assembly, a double ring-shaped homohexamer of HslV is capped on each side by a ring-shaped HslU homohexamer. The assembly of the HslU/HslV complex is dependent on binding of ATP.

Its subcellular location is the cytoplasm. Functionally, ATPase subunit of a proteasome-like degradation complex; this subunit has chaperone activity. The binding of ATP and its subsequent hydrolysis by HslU are essential for unfolding of protein substrates subsequently hydrolyzed by HslV. HslU recognizes the N-terminal part of its protein substrates and unfolds these before they are guided to HslV for hydrolysis. In Pectobacterium atrosepticum (strain SCRI 1043 / ATCC BAA-672) (Erwinia carotovora subsp. atroseptica), this protein is ATP-dependent protease ATPase subunit HslU.